A 76-amino-acid polypeptide reads, in one-letter code: MARKGRPNKRRKVCFFKVNKIKHIDYKDIDLLKKFISERGKILPRRVTGTSAKYQRALTIAIKRSRQVALLPYTAE.

The protein belongs to the bacterial ribosomal protein bS18 family. In terms of assembly, part of the 30S ribosomal subunit. Forms a tight heterodimer with protein bS6.

In terms of biological role, binds as a heterodimer with protein bS6 to the central domain of the 16S rRNA, where it helps stabilize the platform of the 30S subunit. The chain is Small ribosomal subunit protein bS18 from Brevibacillus brevis (strain 47 / JCM 6285 / NBRC 100599).